Here is a 559-residue protein sequence, read N- to C-terminus: Laccase-7 (559 aa).

An N-terminal signal peptide occupies residues M1–A28. 3 N-linked (GlcNAc...) asparagine glycosylation sites follow: N32, N47, and N82. 2 Plastocyanin-like domains span residues T36–G152 and E163–T316. Positions 86 and 88 each coordinate Cu cation. N-linked (GlcNAc...) asparagine glycans are attached at residues N112 and N120. Residues H131 and H133 each coordinate Cu cation. Residues N151, N210, N220, N257, N278, N314, N363, and N443 are each glycosylated (N-linked (GlcNAc...) asparagine). The Plastocyanin-like 3 domain occupies F396–T543. H461, H464, and H466 together coordinate Cu cation. Residue N484 is glycosylated (N-linked (GlcNAc...) asparagine). 4 residues coordinate Cu cation: H522, C523, H524, and H528. N541 carries N-linked (GlcNAc...) asparagine glycosylation.

It belongs to the multicopper oxidase family. Cu cation serves as cofactor.

It localises to the secreted. The protein resides in the extracellular space. It is found in the apoplast. It catalyses the reaction 4 hydroquinone + O2 = 4 benzosemiquinone + 2 H2O. Its function is as follows. Lignin degradation and detoxification of lignin-derived products. This Oryza sativa subsp. japonica (Rice) protein is Laccase-7 (LAC7).